Consider the following 62-residue polypeptide: Photosystem II reaction center protein Z (62 aa).

2 helical membrane-spanning segments follow: residues 8–28 (AVFALIATSSILLISVPVVFA) and 41–61 (FSGTSLWIGLVFLVGILNSLI).

This sequence belongs to the PsbZ family. As to quaternary structure, PSII is composed of 1 copy each of membrane proteins PsbA, PsbB, PsbC, PsbD, PsbE, PsbF, PsbH, PsbI, PsbJ, PsbK, PsbL, PsbM, PsbT, PsbY, PsbZ, Psb30/Ycf12, at least 3 peripheral proteins of the oxygen-evolving complex and a large number of cofactors. It forms dimeric complexes.

The protein localises to the plastid. Its subcellular location is the chloroplast thylakoid membrane. Functionally, may control the interaction of photosystem II (PSII) cores with the light-harvesting antenna, regulates electron flow through the 2 photosystem reaction centers. PSII is a light-driven water plastoquinone oxidoreductase, using light energy to abstract electrons from H(2)O, generating a proton gradient subsequently used for ATP formation. The sequence is that of Photosystem II reaction center protein Z from Gossypium barbadense (Sea Island cotton).